Here is a 1663-residue protein sequence, read N- to C-terminus: Glutamine-rich protein 2 (1663 aa).

Disordered regions lie at residues 80–239, 423–481, 575–615, 880–925, and 948–984; these read HGGF…LVPA, GLVQ…GTGQ, AQPR…QHGL, TYQQ…QVYP, and RGPGYLSADQHGQEGLDPNRTRASDRHGIPAQKAPGQ. 2 stretches are compositionally biased toward polar residues: residues 84-103 and 131-150; these read TSLTSPEGTLSGDSTKQPSI and GVSSREQSKVPSGTGRQQQP. Basic and acidic residues predominate over residues 171–182; that stretch reads SDSDRHRSREKL. The span at 206 to 217 shows a compositional bias: low complexity; the sequence is QPSSVPASQSQV. Over residues 958–975 the composition is skewed to basic and acidic residues; sequence HGQEGLDPNRTRASDRHG. Coiled-coil stretches lie at residues 1085 to 1160 and 1286 to 1325; these read KTVK…MENS and EDHRQKQKDIAMLYQGLEKLEKEKANREHLEMEIDVKADK. Positions 1609–1619 are enriched in basic and acidic residues; sequence TRLPGILRKDS. The disordered stretch occupies residues 1609 to 1663; the sequence is TRLPGILRKDSSGTSKRKSQQPRPHVHRPPSLSSNGQLPSRPQSAQISAGNTSER. Positions 1623-1636 are enriched in basic residues; it reads SKRKSQQPRPHVHR. Residues 1639-1663 show a composition bias toward polar residues; it reads SLSSNGQLPSRPQSAQISAGNTSER.

In terms of assembly, interacts with AKAP3, ODF2 and TSSK4. Interacts with AKAP4. As to expression, expressed in the sperm.

The protein localises to the nucleus membrane. The protein resides in the nucleus. It is found in the cytoplasm. It localises to the cell projection. Its subcellular location is the cilium. The protein localises to the flagellum. Its function is as follows. Has an essential role in the formation of sperm flagella and flagellar structure maintainance. It acts as a suppressor of ubiquitination and degradation of proteins involved in flagellar development and motility. This chain is Glutamine-rich protein 2 (QRICH2), found in Homo sapiens (Human).